The sequence spans 273 residues: Transposable element Tc1 transposase (273 aa).

The protein belongs to the transposase 5 family.

It localises to the nucleus. Probably essential for transposable element Tc1 transposition. The insertion of Tc1 is the main cause of spontaneous mutations. It is an endonuclease which can produce a single strand nick at the 5'-end of the transposon. The chain is Transposable element Tc1 transposase (tc1a) from Caenorhabditis elegans.